The chain runs to 157 residues: Crossover junction endodeoxyribonuclease RuvC (157 aa).

Catalysis depends on residues aspartate 7, glutamate 67, and aspartate 140. Residues aspartate 7, glutamate 67, and aspartate 140 each coordinate Mg(2+).

The protein belongs to the RuvC family. Homodimer which binds Holliday junction (HJ) DNA. The HJ becomes 2-fold symmetrical on binding to RuvC with unstacked arms; it has a different conformation from HJ DNA in complex with RuvA. In the full resolvosome a probable DNA-RuvA(4)-RuvB(12)-RuvC(2) complex forms which resolves the HJ. Requires Mg(2+) as cofactor.

The protein localises to the cytoplasm. The enzyme catalyses Endonucleolytic cleavage at a junction such as a reciprocal single-stranded crossover between two homologous DNA duplexes (Holliday junction).. Its function is as follows. The RuvA-RuvB-RuvC complex processes Holliday junction (HJ) DNA during genetic recombination and DNA repair. Endonuclease that resolves HJ intermediates. Cleaves cruciform DNA by making single-stranded nicks across the HJ at symmetrical positions within the homologous arms, yielding a 5'-phosphate and a 3'-hydroxyl group; requires a central core of homology in the junction. The consensus cleavage sequence is 5'-(A/T)TT(C/G)-3'. Cleavage occurs on the 3'-side of the TT dinucleotide at the point of strand exchange. HJ branch migration catalyzed by RuvA-RuvB allows RuvC to scan DNA until it finds its consensus sequence, where it cleaves and resolves the cruciform DNA. This chain is Crossover junction endodeoxyribonuclease RuvC, found in Rickettsia conorii (strain ATCC VR-613 / Malish 7).